Reading from the N-terminus, the 273-residue chain is SPRY domain-containing SOCS box protein 1 (273 aa).

The residue at position 31 (Tyr31) is a Phosphotyrosine. One can recognise a B30.2/SPRY domain in the interval 33–231; sequence KPTRLDLLLD…IRMRYLNGLD (199 aa). Residues 232 to 273 enclose the SOCS box domain; that stretch reads PEPLPLMDLCRRSVRLALGKGRLGEIHALPLPASLKAYLLYQ.

Belongs to the SPSB family. As to quaternary structure, component of the probable ECS(SPSB1) E3 ubiquitin-protein ligase complex which contains CUL5, RNF7/RBX2, Elongin BC complex and SPSB1. Interacts with CUL5, RNF7, ELOB and ELOC. Directly interacts with MET tyrosine kinase domain in the presence and in the absence of HGF, however HGF treatment has a positive effect on this interaction. When phosphorylated, interacts with RASA1 without affecting its stability. Interacts (via B30.2/SPRY domain) with PAWR; this interaction is direct and occurs in association with the Elongin BC complex. Interacts with NOS2 and EPHB2.

The protein resides in the cytoplasm. Its subcellular location is the cytosol. It functions in the pathway protein modification; protein ubiquitination. In terms of biological role, substrate recognition component of a SCF-like ECS (Elongin BC-CUL2/5-SOCS-box protein) E3 ubiquitin-protein ligase complex which mediates the ubiquitination and subsequent proteasomal degradation of target proteins. Negatively regulates nitric oxide (NO) production and limits cellular toxicity in activated macrophages by mediating the ubiquitination and proteasomal degradation of NOS2. Acts as a bridge which links NOS2 with the ECS E3 ubiquitin ligase complex components ELOC and CUL5. The sequence is that of SPRY domain-containing SOCS box protein 1 (SPSB1) from Bos taurus (Bovine).